Reading from the N-terminus, the 413-residue chain is ATP-dependent (S)-NAD(P)H-hydrate dehydratase (413 aa).

Positions N98–G402 constitute a YjeF C-terminal domain. (6S)-NADPHX contacts are provided by residues G199 and N252–A258. Residues K292 to D296 and G311 to G320 each bind ATP. Residue D321 coordinates (6S)-NADPHX.

Belongs to the NnrD/CARKD family. Mg(2+) serves as cofactor.

The catalysed reaction is (6S)-NADHX + ATP = ADP + phosphate + NADH + H(+). It catalyses the reaction (6S)-NADPHX + ATP = ADP + phosphate + NADPH + H(+). Catalyzes the dehydration of the S-form of NAD(P)HX at the expense of ATP, which is converted to ADP. Together with NAD(P)HX epimerase, which catalyzes the epimerization of the S- and R-forms, the enzyme allows the repair of both epimers of NAD(P)HX, a damaged form of NAD(P)H that is a result of enzymatic or heat-dependent hydration. The polypeptide is ATP-dependent (S)-NAD(P)H-hydrate dehydratase (Heterostelium pallidum (strain ATCC 26659 / Pp 5 / PN500) (Cellular slime mold)).